A 526-amino-acid chain; its full sequence is ESX-1 secretion-associated protein EspB (526 aa).

Residues M1 to R23 show a composition bias toward basic and acidic residues. 3 disordered regions span residues M1–E35, R91–M110, and Q271–Q526. Gly residues predominate over residues G303–T328. The segment covering P335–G362 has biased composition (low complexity). A compositionally biased stretch (gly residues) spans S363 to E387. Residues D393–D405 are compositionally biased toward low complexity. The span at A413–M429 shows a compositional bias: gly residues. Positions P430–A440 are enriched in low complexity. Residues R451–Q484 are compositionally biased toward gly residues. Positions G485 to S508 are enriched in basic and acidic residues.

This sequence belongs to the EspB family.

The protein resides in the secreted. Involved in DNA conjugation, at least in the recipient strain. The sequence is that of ESX-1 secretion-associated protein EspB from Mycolicibacterium smegmatis (strain MKD8) (Mycobacterium smegmatis).